The chain runs to 446 residues: Exodeoxyribonuclease 7 large subunit (446 aa).

The protein belongs to the XseA family. As to quaternary structure, heterooligomer composed of large and small subunits.

The protein resides in the cytoplasm. It catalyses the reaction Exonucleolytic cleavage in either 5'- to 3'- or 3'- to 5'-direction to yield nucleoside 5'-phosphates.. Bidirectionally degrades single-stranded DNA into large acid-insoluble oligonucleotides, which are then degraded further into small acid-soluble oligonucleotides. The polypeptide is Exodeoxyribonuclease 7 large subunit (Xanthomonas campestris pv. campestris (strain 8004)).